A 130-amino-acid chain; its full sequence is Small ribosomal subunit protein uS9 (130 aa).

Belongs to the universal ribosomal protein uS9 family.

This Burkholderia thailandensis (strain ATCC 700388 / DSM 13276 / CCUG 48851 / CIP 106301 / E264) protein is Small ribosomal subunit protein uS9.